We begin with the raw amino-acid sequence, 293 residues long: Nitrogenase iron protein (293 aa).

ATP is bound at residue 10 to 17; it reads GKGGIGKS. Cysteine 98 serves as a coordination point for [4Fe-4S] cluster. Arginine 101 carries the post-translational modification ADP-ribosylarginine; by dinitrogenase reductase ADP-ribosyltransferase. Residue cysteine 133 participates in [4Fe-4S] cluster binding.

This sequence belongs to the NifH/BchL/ChlL family. Homodimer. [4Fe-4S] cluster serves as cofactor. The reversible ADP-ribosylation of Arg-101 inactivates the nitrogenase reductase and regulates nitrogenase activity.

The enzyme catalyses N2 + 8 reduced [2Fe-2S]-[ferredoxin] + 16 ATP + 16 H2O = H2 + 8 oxidized [2Fe-2S]-[ferredoxin] + 2 NH4(+) + 16 ADP + 16 phosphate + 6 H(+). In terms of biological role, the key enzymatic reactions in nitrogen fixation are catalyzed by the nitrogenase complex, which has 2 components: the iron protein and the molybdenum-iron protein. In Klebsiella pneumoniae (strain 342), this protein is Nitrogenase iron protein.